The following is a 220-amino-acid chain: dTTP/UTP pyrophosphatase (220 aa).

D83 (proton acceptor) is an active-site residue.

This sequence belongs to the Maf family. YhdE subfamily. Requires a divalent metal cation as cofactor.

The protein resides in the cytoplasm. The catalysed reaction is dTTP + H2O = dTMP + diphosphate + H(+). It carries out the reaction UTP + H2O = UMP + diphosphate + H(+). Its function is as follows. Nucleoside triphosphate pyrophosphatase that hydrolyzes dTTP and UTP. May have a dual role in cell division arrest and in preventing the incorporation of modified nucleotides into cellular nucleic acids. The polypeptide is dTTP/UTP pyrophosphatase (Syntrophotalea carbinolica (strain DSM 2380 / NBRC 103641 / GraBd1) (Pelobacter carbinolicus)).